The sequence spans 208 residues: Uracil phosphoribosyltransferase (208 aa).

5-phospho-alpha-D-ribose 1-diphosphate is bound by residues Arg78, Arg103, and 130–138; that span reads DPMLATGGT. Residues Ile193 and 198 to 200 contribute to the uracil site; that span reads GDA. Asp199 is a 5-phospho-alpha-D-ribose 1-diphosphate binding site.

It belongs to the UPRTase family. Requires Mg(2+) as cofactor.

It catalyses the reaction UMP + diphosphate = 5-phospho-alpha-D-ribose 1-diphosphate + uracil. The protein operates within pyrimidine metabolism; UMP biosynthesis via salvage pathway; UMP from uracil: step 1/1. With respect to regulation, allosterically activated by GTP. In terms of biological role, catalyzes the conversion of uracil and 5-phospho-alpha-D-ribose 1-diphosphate (PRPP) to UMP and diphosphate. The chain is Uracil phosphoribosyltransferase from Desulfotalea psychrophila (strain LSv54 / DSM 12343).